A 358-amino-acid polypeptide reads, in one-letter code: CCAAT/enhancer-binding protein alpha (358 aa).

The tract at residues 1 to 55 is disordered; the sequence is MESADFYEAEPRPPMSSHLQSPPHAPSSAAFGFPRGAGPAQPPAPPAAPEPLGGI. A required to repress E2F1:TFDP1-mediated transcription, to inhibit cell cycle and to induce adipocyte differentiation region spans residues 1 to 70; the sequence is MESADFYEAE…SIDISAYIDP (70 aa). Positions 29-39 are enriched in low complexity; the sequence is AAFGFPRGAGP. The segment covering 40–49 has biased composition (pro residues); sequence AQPPAPPAAP. Residues 54–72 are required for interaction with TRIB1; sequence GICEHETSIDISAYIDPAA. The required to induce adipocyte differentiation stretch occupies residues 128 to 204; the sequence is PPGYGCAAAG…HPPPAHLAAP (77 aa). Position 161 is an N6-acetyllysine; alternate (Lys-161). Lys-161 participates in a covalent cross-link: Glycyl lysine isopeptide (Lys-Gly) (interchain with G-Cter in SUMO2); alternate. 2 disordered regions span residues 178 to 201 and 217 to 291; these read LFPY…PAHL and TMHL…RRER. Pro residues-rich tracts occupy residues 181–199 and 224–238; these read YQPP…PPPA and HPTP…PHPA. The interval 182 to 198 is required to functionally cooperate with SREBF1 in promoter activation; sequence QPPPPPPPSHPHPHPPP. The residue at position 190 (Ser-190) is a Phosphoserine. Residues Thr-226 and Thr-230 each carry the phosphothreonine; by GSK3 modification. A Phosphoserine; by GSK3 modification is found at Ser-234. A compositionally biased stretch (low complexity) spans 239–259; the sequence is PALGAAGLPGPGSALKGLGAA. Residues 244 to 358 are interaction with FOXO1; sequence AGLPGPGSAL…SLVKAMGNCA (115 aa). Basic and acidic residues predominate over residues 276-291; the sequence is KSVDKNSNEYRVRRER. Residues 282–345 form the bZIP domain; that stretch reads SNEYRVRRER…DTLRGIFRQL (64 aa). Residues 285 to 300 mediate DNA binding; the sequence is YRVRRERNNIAVRKSR. Residues 286-313 are basic motif; it reads RVRRERNNIAVRKSRDKAKQRNVETQQK. The leucine-zipper stretch occupies residues 317–345; it reads LTSDNDRLRKRVEQLSRELDTLRGIFRQL.

It belongs to the bZIP family. C/EBP subfamily. As to quaternary structure, binds DNA as a homodimer and as a heterodimer. Can form stable heterodimers with CEBPB, CEBPD, CEBPE and CEBPG. Interacts with PRDM16. Interacts with UBN1. Interacts with ZNF638; this interaction increases transcriptional activation. Interacts with the complex TFDP2:E2F1; the interaction prevents CEBPA binding to target gene promoters and represses its transcriptional activity. Interacts with RB1. Interacts (when phosphorylated at Ser-190) with CDK2, CDK4, E2F4 and SMARCA2. Interacts with SREBPF1. Interacts with FOXO1 (via the Fork-head domain); the interaction increases when FOXO1 is deacetylated. Interacts with SIX1. Interacts (via recognition sequence) with TRIB1. Interacts (via bZIP domain) with OVOL2 (via zinc-finger domains); the interaction inhibits the transcription factor activity of CEBPA and is required to repress adipogenesis. Interacts with TAF1A and UBTF. In terms of assembly, interacts with TAF1A and UBTF. Interacts with NPM1. As to quaternary structure, (Microbial infection) Interacts with HBV protein X. (Microbial infection) Interacts with Epstein-Barr virus lytic switch protein BZLF1; this interaction induces G1 cell cycle arrest. Phosphorylation at Ser-190 is required for interaction with CDK2, CDK4 and SWI/SNF complex leading to cell cycle inhibition. Dephosphorylated at Ser-190 by protein phosphatase 2A (PP2A) through PI3K/AKT signaling pathway regulation. Phosphorylation at Thr-226 and Thr-230 by GSK3 is constitutive in adipose tissue and lung. In liver, both Thr-226 and Thr-230 are phosphorylated only during feeding but not during fasting. Phosphorylation of the GSK3 consensus sites selectively decreases transactivation activity on IRE-controlled promoters. Post-translationally, sumoylated, sumoylation blocks the inhibitory effect on cell proliferation by disrupting the interaction with SMARCA2. In terms of processing, ubiquitinated by COP1 upon interaction with TRIB1.

The protein localises to the nucleus. The protein resides in the nucleolus. Its function is as follows. Transcription factor that coordinates proliferation arrest and the differentiation of myeloid progenitors, adipocytes, hepatocytes, and cells of the lung and the placenta. Binds directly to the consensus DNA sequence 5'-T[TG]NNGNAA[TG]-3' acting as an activator on distinct target genes. During early embryogenesis, plays essential and redundant functions with CEBPB. Essential for the transition from common myeloid progenitors (CMP) to granulocyte/monocyte progenitors (GMP). Critical for the proper development of the liver and the lung. Necessary for terminal adipocyte differentiation, is required for postnatal maintenance of systemic energy homeostasis and lipid storage. To regulate these different processes at the proper moment and tissue, interplays with other transcription factors and modulators. Down-regulates the expression of genes that maintain cells in an undifferentiated and proliferative state through E2F1 repression, which is critical for its ability to induce adipocyte and granulocyte terminal differentiation. Reciprocally E2F1 blocks adipocyte differentiation by binding to specific promoters and repressing CEBPA binding to its target gene promoters. Proliferation arrest also depends on a functional binding to SWI/SNF complex. In liver, regulates gluconeogenesis and lipogenesis through different mechanisms. To regulate gluconeogenesis, functionally cooperates with FOXO1 binding to IRE-controlled promoters and regulating the expression of target genes such as PCK1 or G6PC1. To modulate lipogenesis, interacts and transcriptionally synergizes with SREBF1 in promoter activation of specific lipogenic target genes such as ACAS2. In adipose tissue, seems to act as FOXO1 coactivator accessing to ADIPOQ promoter through FOXO1 binding sites. In terms of biological role, can act as dominant-negative. Binds DNA and have transctivation activity, even if much less efficiently than isoform 2. Does not inhibit cell proliferation. Directly and specifically enhances ribosomal DNA transcription interacting with RNA polymerase I-specific cofactors and inducing histone acetylation. In Homo sapiens (Human), this protein is CCAAT/enhancer-binding protein alpha.